The sequence spans 269 residues: Expansin-B1 (269 aa).

The N-terminal stretch at M1 to C24 is a signal peptide. N34 carries N-linked (GlcNAc...) asparagine glycosylation. An Expansin-like EG45 domain is found at G63–G169. Cystine bridges form between C66–C94, C97–C164, and C102–C108. Residues N183–S264 enclose the Expansin-like CBD domain.

It belongs to the expansin family. Expansin B subfamily. In terms of tissue distribution, expressed in anthers and pollen.

The protein localises to the secreted. It localises to the cell wall. Its subcellular location is the membrane. Functionally, may aid fertilization by loosening the cell wall of the stigma and style, thereby facilitating penetration of the pollen tube. Acts selectively on grass cell walls, which are relatively poor in pectins and xyloglucans and rich in glucuronoarabinoxylans and (1-3),(1-4)-beta-D-glucans, when compared with cell walls of other angiosperms, including other monocots. The protein is Expansin-B1 (EXPB1) of Zea mays (Maize).